Consider the following 127-residue polypeptide: Protein ApaG (127 aa).

Positions 3-127 constitute an ApaG domain; the sequence is ANSPPTIKCN…FRLAIPNILH (125 aa).

This chain is Protein ApaG, found in Photobacterium profundum (strain SS9).